The chain runs to 481 residues: Ankyrin repeat, SAM and basic leucine zipper domain-containing protein 1 (481 aa).

Over residues methionine 1–glutamate 16 the composition is skewed to gly residues. Residues methionine 1 to aspartate 23 are disordered. Serine 17, serine 18, and serine 20 each carry phosphoserine. ANK repeat units follow at residues glutamate 45–serine 74, tyrosine 78–phenylalanine 107, aspartate 110–valine 144, arginine 148–threonine 177, asparagine 181–leucine 210, and aspartate 214–glycine 243. The region spanning serine 272–glutamate 334 is the SAM domain.

As to quaternary structure, interacts with DDX4, PIWIL1, RANBP9 and TDRD1.

It localises to the cytoplasm. In terms of biological role, plays a central role during spermatogenesis by repressing transposable elements and preventing their mobilization, which is essential for the germline integrity. Acts via the piRNA metabolic process, which mediates the repression of transposable elements during meiosis by forming complexes composed of piRNAs and Piwi proteins and governs the methylation and subsequent repression of transposons. Its association with pi-bodies suggests a participation in the primary piRNAs metabolic process. Required prior to the pachytene stage to facilitate the production of multiple types of piRNAs, including those associated with repeats involved in the regulation of retrotransposons. May act by mediating protein-protein interactions during germ cell maturation. The chain is Ankyrin repeat, SAM and basic leucine zipper domain-containing protein 1 (ASZ1) from Microcebus murinus (Gray mouse lemur).